We begin with the raw amino-acid sequence, 178 residues long: ATP-dependent protease subunit HslV (178 aa).

The active site involves T7. 3 residues coordinate Na(+): G162, C165, and T168.

It belongs to the peptidase T1B family. HslV subfamily. In terms of assembly, a double ring-shaped homohexamer of HslV is capped on each side by a ring-shaped HslU homohexamer. The assembly of the HslU/HslV complex is dependent on binding of ATP.

It is found in the cytoplasm. It catalyses the reaction ATP-dependent cleavage of peptide bonds with broad specificity.. Its activity is regulated as follows. Allosterically activated by HslU binding. Its function is as follows. Protease subunit of a proteasome-like degradation complex believed to be a general protein degrading machinery. This Burkholderia orbicola (strain AU 1054) protein is ATP-dependent protease subunit HslV.